Reading from the N-terminus, the 497-residue chain is tRNA-2-methylthio-N(6)-dimethylallyladenosine synthase (497 aa).

Residues 1–50 form a disordered region; sequence MTGTSNIPTHGKEHKDAPALLPLPAPNPHHTHAAHPGDPSHDRPPSRGKL. Positions 48–165 constitute an MTTase N-terminal domain; sequence GKLFIKTHGC…LPDMIRARRE (118 aa). Cysteine 57, cysteine 94, cysteine 128, cysteine 202, cysteine 206, and cysteine 209 together coordinate [4Fe-4S] cluster. Residues 188–430 form the Radical SAM core domain; that stretch reads RAEGPSAFVS…QKHINAYAAD (243 aa). One can recognise a TRAM domain in the interval 433 to 496; the sequence is KRMIGTVQTV…TNSLRGRVHT (64 aa).

It belongs to the methylthiotransferase family. MiaB subfamily. As to quaternary structure, monomer. [4Fe-4S] cluster serves as cofactor.

The protein localises to the cytoplasm. The enzyme catalyses N(6)-dimethylallyladenosine(37) in tRNA + (sulfur carrier)-SH + AH2 + 2 S-adenosyl-L-methionine = 2-methylsulfanyl-N(6)-dimethylallyladenosine(37) in tRNA + (sulfur carrier)-H + 5'-deoxyadenosine + L-methionine + A + S-adenosyl-L-homocysteine + 2 H(+). Its function is as follows. Catalyzes the methylthiolation of N6-(dimethylallyl)adenosine (i(6)A), leading to the formation of 2-methylthio-N6-(dimethylallyl)adenosine (ms(2)i(6)A) at position 37 in tRNAs that read codons beginning with uridine. In Xylella fastidiosa (strain M12), this protein is tRNA-2-methylthio-N(6)-dimethylallyladenosine synthase.